The following is a 314-amino-acid chain: 4-hydroxy-3-methylbut-2-enyl diphosphate reductase (314 aa).

Cysteine 12 is a binding site for [4Fe-4S] cluster. 2 residues coordinate (2E)-4-hydroxy-3-methylbut-2-enyl diphosphate: histidine 41 and histidine 74. Residues histidine 41 and histidine 74 each coordinate dimethylallyl diphosphate. Isopentenyl diphosphate-binding residues include histidine 41 and histidine 74. Cysteine 96 is a binding site for [4Fe-4S] cluster. Histidine 124 contacts (2E)-4-hydroxy-3-methylbut-2-enyl diphosphate. Histidine 124 contributes to the dimethylallyl diphosphate binding site. Histidine 124 provides a ligand contact to isopentenyl diphosphate. Glutamate 126 serves as the catalytic Proton donor. A (2E)-4-hydroxy-3-methylbut-2-enyl diphosphate-binding site is contributed by threonine 167. Residue cysteine 197 participates in [4Fe-4S] cluster binding. (2E)-4-hydroxy-3-methylbut-2-enyl diphosphate-binding residues include serine 225, serine 226, asparagine 227, and serine 269. Dimethylallyl diphosphate is bound by residues serine 225, serine 226, asparagine 227, and serine 269. 4 residues coordinate isopentenyl diphosphate: serine 225, serine 226, asparagine 227, and serine 269.

It belongs to the IspH family. [4Fe-4S] cluster serves as cofactor.

It catalyses the reaction isopentenyl diphosphate + 2 oxidized [2Fe-2S]-[ferredoxin] + H2O = (2E)-4-hydroxy-3-methylbut-2-enyl diphosphate + 2 reduced [2Fe-2S]-[ferredoxin] + 2 H(+). The enzyme catalyses dimethylallyl diphosphate + 2 oxidized [2Fe-2S]-[ferredoxin] + H2O = (2E)-4-hydroxy-3-methylbut-2-enyl diphosphate + 2 reduced [2Fe-2S]-[ferredoxin] + 2 H(+). The protein operates within isoprenoid biosynthesis; dimethylallyl diphosphate biosynthesis; dimethylallyl diphosphate from (2E)-4-hydroxy-3-methylbutenyl diphosphate: step 1/1. It participates in isoprenoid biosynthesis; isopentenyl diphosphate biosynthesis via DXP pathway; isopentenyl diphosphate from 1-deoxy-D-xylulose 5-phosphate: step 6/6. Catalyzes the conversion of 1-hydroxy-2-methyl-2-(E)-butenyl 4-diphosphate (HMBPP) into a mixture of isopentenyl diphosphate (IPP) and dimethylallyl diphosphate (DMAPP). Acts in the terminal step of the DOXP/MEP pathway for isoprenoid precursor biosynthesis. In Haemophilus influenzae (strain PittGG), this protein is 4-hydroxy-3-methylbut-2-enyl diphosphate reductase.